The following is a 186-amino-acid chain: Elongation factor P (186 aa).

It belongs to the elongation factor P family.

It is found in the cytoplasm. Its pathway is protein biosynthesis; polypeptide chain elongation. Its function is as follows. Involved in peptide bond synthesis. Stimulates efficient translation and peptide-bond synthesis on native or reconstituted 70S ribosomes in vitro. Probably functions indirectly by altering the affinity of the ribosome for aminoacyl-tRNA, thus increasing their reactivity as acceptors for peptidyl transferase. The sequence is that of Elongation factor P from Laribacter hongkongensis (strain HLHK9).